Consider the following 400-residue polypeptide: Delta(12) fatty acid desaturase (400 aa).

A helical transmembrane segment spans residues 91-111 (LAWPAYWIMQGIVCTGIWVLA). Positions 112 to 116 (HECGH) match the Histidine box-1 motif. A Histidine box-2 motif is present at residues 148–152 (HSKHH). The next 3 membrane-spanning stretches (helical) occupy residues 199 to 219 (IVTL…YLIM), 245 to 265 (FFDI…LIYA), and 277 to 297 (YYIV…FLQH). The Histidine box-3 signature appears at 339–343 (HVAHH).

It belongs to the fatty acid desaturase type 1 family.

Its subcellular location is the membrane. It catalyses the reaction (9Z)-octadecenoyl-CoA + 2 Fe(II)-[cytochrome b5] + O2 + 2 H(+) = (9Z,12Z)-octadecadienoyl-CoA + 2 Fe(III)-[cytochrome b5] + 2 H2O. The catalysed reaction is (9Z)-hexadecenoyl-CoA + 2 Fe(II)-[cytochrome b5] + O2 + 2 H(+) = (9Z,12Z)-hexadecadienoyl-CoA + 2 Fe(III)-[cytochrome b5] + 2 H2O. Its pathway is lipid metabolism; polyunsaturated fatty acid biosynthesis. In terms of biological role, catalyzes the desaturation of oleic acid (Delta(9)-18:1) to linoleic acid (Delta(9), Delta(12)-18:2). In Mortierella alpina (Oleaginous fungus), this protein is Delta(12) fatty acid desaturase.